The sequence spans 291 residues: Probable L-ascorbate peroxidase 4, peroxisomal (291 aa).

H40 (proton acceptor) is an active-site residue. H160 lines the heme b pocket. Positions 161, 177, and 184 each coordinate K(+). Residues V263–L283 form a helical membrane-spanning segment.

This sequence belongs to the peroxidase family. Ascorbate peroxidase subfamily. It depends on heme b as a cofactor. Expressed in leaves, stems and flowers.

Its subcellular location is the peroxisome membrane. It catalyses the reaction L-ascorbate + H2O2 = L-dehydroascorbate + 2 H2O. Plays a key role in hydrogen peroxide removal. The sequence is that of Probable L-ascorbate peroxidase 4, peroxisomal from Oryza sativa subsp. japonica (Rice).